Reading from the N-terminus, the 154-residue chain is Putative protein heh-1 (154 aa).

Residues 1–15 (MKTVIFLALLGLAAA) form the signal peptide. Cystine bridges form between Cys-39–Cys-50 and Cys-97–Cys-103.

This sequence belongs to the NPC2 family.

The protein localises to the secreted. This Caenorhabditis elegans protein is Putative protein heh-1 (heh-1).